A 244-amino-acid polypeptide reads, in one-letter code: UDP-2,3-diacylglucosamine hydrolase (244 aa).

Mn(2+) is bound by residues aspartate 8, histidine 10, aspartate 41, asparagine 79, and histidine 114. Residue 79 to 80 participates in substrate binding; it reads NR. Residues aspartate 122, lysine 164, lysine 167, and histidine 195 each contribute to the substrate site. Positions 195 and 197 each coordinate Mn(2+).

It belongs to the LpxH family. Requires Mn(2+) as cofactor.

It is found in the cell inner membrane. The catalysed reaction is UDP-2-N,3-O-bis[(3R)-3-hydroxytetradecanoyl]-alpha-D-glucosamine + H2O = 2-N,3-O-bis[(3R)-3-hydroxytetradecanoyl]-alpha-D-glucosaminyl 1-phosphate + UMP + 2 H(+). It functions in the pathway glycolipid biosynthesis; lipid IV(A) biosynthesis; lipid IV(A) from (3R)-3-hydroxytetradecanoyl-[acyl-carrier-protein] and UDP-N-acetyl-alpha-D-glucosamine: step 4/6. Hydrolyzes the pyrophosphate bond of UDP-2,3-diacylglucosamine to yield 2,3-diacylglucosamine 1-phosphate (lipid X) and UMP by catalyzing the attack of water at the alpha-P atom. Involved in the biosynthesis of lipid A, a phosphorylated glycolipid that anchors the lipopolysaccharide to the outer membrane of the cell. In Vibrio atlanticus (strain LGP32) (Vibrio splendidus (strain Mel32)), this protein is UDP-2,3-diacylglucosamine hydrolase.